Consider the following 572-residue polypeptide: Proline--tRNA ligase (572 aa).

This sequence belongs to the class-II aminoacyl-tRNA synthetase family. ProS type 1 subfamily. Homodimer.

It localises to the cytoplasm. The enzyme catalyses tRNA(Pro) + L-proline + ATP = L-prolyl-tRNA(Pro) + AMP + diphosphate. Its function is as follows. Catalyzes the attachment of proline to tRNA(Pro) in a two-step reaction: proline is first activated by ATP to form Pro-AMP and then transferred to the acceptor end of tRNA(Pro). As ProRS can inadvertently accommodate and process non-cognate amino acids such as alanine and cysteine, to avoid such errors it has two additional distinct editing activities against alanine. One activity is designated as 'pretransfer' editing and involves the tRNA(Pro)-independent hydrolysis of activated Ala-AMP. The other activity is designated 'posttransfer' editing and involves deacylation of mischarged Ala-tRNA(Pro). The misacylated Cys-tRNA(Pro) is not edited by ProRS. This chain is Proline--tRNA ligase, found in Shewanella amazonensis (strain ATCC BAA-1098 / SB2B).